The sequence spans 674 residues: tRNA 5-methylaminomethyl-2-thiouridine biosynthesis bifunctional protein MnmC (674 aa).

The tract at residues 1 to 237 is tRNA (mnm(5)s(2)U34)-methyltransferase; that stretch reads MLTSYQLESP…KREMTVGELN (237 aa). Residues 270 to 674 are FAD-dependent cmnm(5)s(2)U34 oxidoreductase; it reads VGAGLAGANT…IRDLKRSQIL (405 aa).

This sequence in the N-terminal section; belongs to the methyltransferase superfamily. tRNA (mnm(5)s(2)U34)-methyltransferase family. In the C-terminal section; belongs to the DAO family. FAD serves as cofactor.

Its subcellular location is the cytoplasm. The enzyme catalyses 5-aminomethyl-2-thiouridine(34) in tRNA + S-adenosyl-L-methionine = 5-methylaminomethyl-2-thiouridine(34) in tRNA + S-adenosyl-L-homocysteine + H(+). Its function is as follows. Catalyzes the last two steps in the biosynthesis of 5-methylaminomethyl-2-thiouridine (mnm(5)s(2)U) at the wobble position (U34) in tRNA. Catalyzes the FAD-dependent demodification of cmnm(5)s(2)U34 to nm(5)s(2)U34, followed by the transfer of a methyl group from S-adenosyl-L-methionine to nm(5)s(2)U34, to form mnm(5)s(2)U34. In Marinomonas sp. (strain MWYL1), this protein is tRNA 5-methylaminomethyl-2-thiouridine biosynthesis bifunctional protein MnmC.